A 568-amino-acid polypeptide reads, in one-letter code: Autophagy-related protein 18 (568 aa).

A WD 1 repeat occupies 19–57 (KPSSSVNFITFNQDGSCIAVGNNKGYSIFTTNPFTKCYD). Residues 162-171 (STDTSNSADN) are compositionally biased toward polar residues. A disordered region spans residues 162-210 (STDTSNSADNSGSIGSGPASGSGAGSGSASMTSTDSTPDAQSHSYLAYP). The span at 175–187 (IGSGPASGSGAGS) shows a compositional bias: gly residues. The span at 188-198 (GSASMTSTDST) shows a compositional bias: low complexity. WD repeat units lie at residues 268–308 (AHKS…KLYQ) and 313–352 (TYPT…SLES). The L/FRRG motif signature appears at 309–313 (FRRGT). The interval 350–429 (LESKHKRKRA…ISGMSEDGKE (80 aa)) is disordered. A compositionally biased stretch (acidic residues) spans 375-394 (DLDDEIEDDGDDSDVDDVES). The span at 405-421 (LSQGSSNSYTSMNSGIS) shows a compositional bias: polar residues. 2 WD repeats span residues 464-508 (DFLP…DMVP) and 518-558 (APAS…GGDC).

It belongs to the WD repeat PROPPIN family. As to quaternary structure, component of the PI(3,5)P2 regulatory complex.

It is found in the preautophagosomal structure membrane. Its subcellular location is the vacuole membrane. The protein resides in the endosome membrane. Functionally, the PI(3,5)P2 regulatory complex regulates both the synthesis and turnover of phosphatidylinositol 3,5-bisphosphate (PtdIns(3,5)P2). Necessary for proper vacuole morphology. Plays an important role in osmotically-induced vacuole fragmentation. Required for cytoplasm to vacuole transport (Cvt) vesicle formation, pexophagy and starvation-induced autophagy. Involved in correct ATG9 trafficking to the pre-autophagosomal structure. Might also be involved in premeiotic DNA replication. This chain is Autophagy-related protein 18 (ATG18), found in Meyerozyma guilliermondii (strain ATCC 6260 / CBS 566 / DSM 6381 / JCM 1539 / NBRC 10279 / NRRL Y-324) (Yeast).